The primary structure comprises 303 residues: Eukaryotic translation initiation factor 3 subunit G (303 aa).

4 disordered regions span residues 1 to 32, 81 to 100, 105 to 126, and 181 to 215; these read MAAV…QTIV, GLSA…VGEN, PSAN…NAMK, and GAAG…AGGK. The segment covering 109-126 has biased composition (basic and acidic residues); sequence WRKDQKDESKDANANAMK. The 79-residue stretch at 223 to 301 folds into the RRM domain; sequence ATLRVTNVSE…LILRVEFAKK (79 aa).

It belongs to the eIF-3 subunit G family. As to quaternary structure, component of the eukaryotic translation initiation factor 3 (eIF-3) complex.

It is found in the cytoplasm. In terms of biological role, RNA-binding component of the eukaryotic translation initiation factor 3 (eIF-3) complex, which is involved in protein synthesis of a specialized repertoire of mRNAs and, together with other initiation factors, stimulates binding of mRNA and methionyl-tRNAi to the 40S ribosome. The eIF-3 complex specifically targets and initiates translation of a subset of mRNAs involved in cell proliferation. This subunit can bind 18S rRNA. In Pyricularia oryzae (strain 70-15 / ATCC MYA-4617 / FGSC 8958) (Rice blast fungus), this protein is Eukaryotic translation initiation factor 3 subunit G.